The sequence spans 206 residues: Small ribosomal subunit protein uS4 (206 aa).

Residues Cys-96–Gln-157 enclose the S4 RNA-binding domain.

This sequence belongs to the universal ribosomal protein uS4 family. In terms of assembly, part of the 30S ribosomal subunit. Contacts protein S5. The interaction surface between S4 and S5 is involved in control of translational fidelity.

Functionally, one of the primary rRNA binding proteins, it binds directly to 16S rRNA where it nucleates assembly of the body of the 30S subunit. With S5 and S12 plays an important role in translational accuracy. The polypeptide is Small ribosomal subunit protein uS4 (Stutzerimonas stutzeri (strain A1501) (Pseudomonas stutzeri)).